The chain runs to 416 residues: MSNFPSLRRDDRPDDPFADPLDAVLAELAINIQLPPGLHAKAVERYEAVRRYIERPGSPLEGRVACFYPQGSMAIDATTSTRGTDDEYDLDIVAEIEGPDLGPEALLDDLEAALESYPVSKVVRQTRCITLYYADGMHLDITPSRRRAPKEKEGEIPHAKKGTRSDPARYVPMNSYAFGKWYCARTPTEERFALALNRQLYEQAGIAFAAADVEDVPPQTPLIIKSVTTVALQLIKRHRNIAYATETGRIPPSVMLSCHAGHAARPGMRLAEMLIRQARWTARAIDDAAKRGQLLVVPNPEFPVERFTDRWPESQLQQTTYSRHLHTLANGLEAARTGDVQLEDLQEWLRGQFGDRVVTRSVKAFNQRLGRQVQSRQHGYTRSGGLFVPAAPAIIGAATSLAPVAARAHTNMGERR.

Ser72 contributes to the GTP binding site. Catalysis depends on residues Asp89, Asp91, and Asp140. Asp91 is a binding site for GTP. Asp91 is a Mg(2+) binding site. Residues 145–167 form a disordered region; that stretch reads RRRAPKEKEGEIPHAKKGTRSDP. Positions 150-167 are enriched in basic and acidic residues; it reads KEKEGEIPHAKKGTRSDP. GTP contacts are provided by Lys236, Ser253, Glu305, Arg306, and Asp309.

This sequence belongs to the CD-NTase family. G10 subfamily. Requires Mg(2+) as cofactor.

The catalysed reaction is UTP + GTP = 3',3'-cGMP-UMP + 2 diphosphate. It catalyses the reaction GTP + ATP = 3',3'-cGAMP + 2 diphosphate. The enzyme catalyses 2 ATP = 3',3'-c-di-AMP + 2 diphosphate. Functionally, cyclic nucleotide synthase (second messenger synthase) of a CBASS antivirus system. CBASS (cyclic oligonucleotide-based antiphage signaling system) provides immunity against bacteriophage. The CD-NTase protein synthesizes cyclic nucleotides in response to infection; these serve as specific second messenger signals. The signals activate a diverse range of effectors, leading to bacterial cell death and thus abortive phage infection. A type II-short CBASS system. Its function is as follows. Cyclic dinucleotide synthase that catalyzes the synthesis of predominantly 3'3'-cGMP-UMP, followed by 3'3'-cGAMP and c-di-AMP in a reaction mixture of ATP, CTP, GTP and UTP. The cyclic nucleotide products are second messengers that activate the CBASS Cap5 effector nuclease, leading to DNA degradation and probably cell death. Cyclic nucleotides do not activate the effector equally; reactions with ATP/GTP, ATP/UTP and ATP alone activate Cap5, whereas reaction with GTP/UTP (the major in vitro product) do not. This chain is Cyclic dinucleotide synthase CdnG, found in Bradyrhizobium diazoefficiens (strain JCM 10833 / BCRC 13528 / IAM 13628 / NBRC 14792 / USDA 110).